A 90-amino-acid polypeptide reads, in one-letter code: Acylphosphatase (90 aa).

Residues 3 to 89 enclose the Acylphosphatase-like domain; that stretch reads ALKIRVEGIV…EGYEDFTIKY (87 aa). Residues arginine 18 and asparagine 36 contribute to the active site.

Belongs to the acylphosphatase family.

It catalyses the reaction an acyl phosphate + H2O = a carboxylate + phosphate + H(+). The protein is Acylphosphatase (acyP) of Thermotoga maritima (strain ATCC 43589 / DSM 3109 / JCM 10099 / NBRC 100826 / MSB8).